A 944-amino-acid polypeptide reads, in one-letter code: Isoleucine--tRNA ligase (944 aa).

The 'HIGH' region motif lies at 58 to 68 (PYANGSIHIGH). L-isoleucyl-5'-AMP is bound at residue glutamate 563. The 'KMSKS' region signature appears at 604–608 (KMSKS). Lysine 607 contacts ATP. Zn(2+)-binding residues include cysteine 907, cysteine 910, cysteine 927, and cysteine 930.

Belongs to the class-I aminoacyl-tRNA synthetase family. IleS type 1 subfamily. In terms of assembly, monomer. The cofactor is Zn(2+).

It is found in the cytoplasm. It catalyses the reaction tRNA(Ile) + L-isoleucine + ATP = L-isoleucyl-tRNA(Ile) + AMP + diphosphate. Catalyzes the attachment of isoleucine to tRNA(Ile). As IleRS can inadvertently accommodate and process structurally similar amino acids such as valine, to avoid such errors it has two additional distinct tRNA(Ile)-dependent editing activities. One activity is designated as 'pretransfer' editing and involves the hydrolysis of activated Val-AMP. The other activity is designated 'posttransfer' editing and involves deacylation of mischarged Val-tRNA(Ile). This chain is Isoleucine--tRNA ligase, found in Salmonella typhi.